The following is a 492-amino-acid chain: Proline--tRNA ligase (492 aa).

It belongs to the class-II aminoacyl-tRNA synthetase family. ProS type 3 subfamily. Homodimer.

It localises to the cytoplasm. The catalysed reaction is tRNA(Pro) + L-proline + ATP = L-prolyl-tRNA(Pro) + AMP + diphosphate. Catalyzes the attachment of proline to tRNA(Pro) in a two-step reaction: proline is first activated by ATP to form Pro-AMP and then transferred to the acceptor end of tRNA(Pro). This Flavobacterium psychrophilum (strain ATCC 49511 / DSM 21280 / CIP 103535 / JIP02/86) protein is Proline--tRNA ligase.